A 32-amino-acid chain; its full sequence is Dermaseptin-DA4 (32 aa).

As to expression, expressed by the skin glands.

It is found in the secreted. The protein resides in the target cell membrane. In terms of biological role, antimicrobial peptide with activity against Gram-negative bacteria, but not against Gram-positive bacteria. Active against E.coli (MIC=5 uM), and P.aeruginosa (MIC=40 uM). Acts by disrupting cell membranes. Is able to depolarize membranes of Gram-positive and Gram-negative bacteria. Also acts as a potent chemoattractant for human leukocytes and activates them mainly through a GPCR, possibly FPRL1 coupled to the ERK1/2 MAPK pathway. Is unstructured in water but become helical upon binding to anionic lipids. In contrast to most dermaseptins, is not structured in the presence of zwitterionic lipids. Does not show hemolytic activity. This is Dermaseptin-DA4 from Agalychnis dacnicolor (Giant Mexican leaf frog).